A 364-amino-acid polypeptide reads, in one-letter code: Dual-specificity RNA methyltransferase RlmN (364 aa).

The active-site Proton acceptor is E91. The region spanning 97 to 333 is the Radical SAM core domain; that stretch reads EDDRGTLCIS…TTTRKTRGDD (237 aa). An intrachain disulfide couples C104 to C338. [4Fe-4S] cluster contacts are provided by C111, C115, and C118. Residues 164–165, S196, 218–220, and N295 contribute to the S-adenosyl-L-methionine site; these read GE and SLH. C338 (S-methylcysteine intermediate) is an active-site residue.

This sequence belongs to the radical SAM superfamily. RlmN family. [4Fe-4S] cluster serves as cofactor.

Its subcellular location is the cytoplasm. It carries out the reaction adenosine(2503) in 23S rRNA + 2 reduced [2Fe-2S]-[ferredoxin] + 2 S-adenosyl-L-methionine = 2-methyladenosine(2503) in 23S rRNA + 5'-deoxyadenosine + L-methionine + 2 oxidized [2Fe-2S]-[ferredoxin] + S-adenosyl-L-homocysteine. It catalyses the reaction adenosine(37) in tRNA + 2 reduced [2Fe-2S]-[ferredoxin] + 2 S-adenosyl-L-methionine = 2-methyladenosine(37) in tRNA + 5'-deoxyadenosine + L-methionine + 2 oxidized [2Fe-2S]-[ferredoxin] + S-adenosyl-L-homocysteine. Functionally, specifically methylates position 2 of adenine 2503 in 23S rRNA and position 2 of adenine 37 in tRNAs. m2A2503 modification seems to play a crucial role in the proofreading step occurring at the peptidyl transferase center and thus would serve to optimize ribosomal fidelity. This Dechloromonas aromatica (strain RCB) protein is Dual-specificity RNA methyltransferase RlmN.